The primary structure comprises 156 residues: Small ribosomal subunit protein uS7 (156 aa).

Belongs to the universal ribosomal protein uS7 family. In terms of assembly, part of the 30S ribosomal subunit. Contacts proteins S9 and S11.

One of the primary rRNA binding proteins, it binds directly to 16S rRNA where it nucleates assembly of the head domain of the 30S subunit. Is located at the subunit interface close to the decoding center, probably blocks exit of the E-site tRNA. This is Small ribosomal subunit protein uS7 from Syntrophobacter fumaroxidans (strain DSM 10017 / MPOB).